Reading from the N-terminus, the 166-residue chain is Regulatory protein RecX (166 aa).

The protein belongs to the RecX family.

Its subcellular location is the cytoplasm. Its function is as follows. Modulates RecA activity. This is Regulatory protein RecX from Klebsiella pneumoniae (strain 342).